Here is a 153-residue protein sequence, read N- to C-terminus: UPF0266 membrane protein YPTB1631 (153 aa).

A run of 3 helical transmembrane segments spans residues 6-26, 45-65, and 67-87; these read LVLVVFIALLLIYAIYDEFIM, LDCMIFVGLIGILIYNNVMAH, and APLTTYLLVGLALVAVYISYI.

The protein belongs to the UPF0266 family.

The protein localises to the cell inner membrane. This is UPF0266 membrane protein YPTB1631 from Yersinia pseudotuberculosis serotype I (strain IP32953).